The primary structure comprises 184 residues: ATP-dependent protease subunit HslV (184 aa).

Residue Thr-12 is part of the active site. Na(+) is bound by residues Ala-166, Cys-169, and Thr-172.

This sequence belongs to the peptidase T1B family. HslV subfamily. A double ring-shaped homohexamer of HslV is capped on each side by a ring-shaped HslU homohexamer. The assembly of the HslU/HslV complex is dependent on binding of ATP.

It is found in the cytoplasm. It carries out the reaction ATP-dependent cleavage of peptide bonds with broad specificity.. Allosterically activated by HslU binding. Functionally, protease subunit of a proteasome-like degradation complex believed to be a general protein degrading machinery. In Brucella anthropi (strain ATCC 49188 / DSM 6882 / CCUG 24695 / JCM 21032 / LMG 3331 / NBRC 15819 / NCTC 12168 / Alc 37) (Ochrobactrum anthropi), this protein is ATP-dependent protease subunit HslV.